We begin with the raw amino-acid sequence, 293 residues long: tRNA pseudouridine synthase B (293 aa).

D39 serves as the catalytic Nucleophile.

This sequence belongs to the pseudouridine synthase TruB family. Type 1 subfamily.

The catalysed reaction is uridine(55) in tRNA = pseudouridine(55) in tRNA. Responsible for synthesis of pseudouridine from uracil-55 in the psi GC loop of transfer RNAs. In Streptococcus mutans serotype c (strain ATCC 700610 / UA159), this protein is tRNA pseudouridine synthase B.